The primary structure comprises 626 residues: Trehalase (626 aa).

The next 2 membrane-spanning stretches (helical) occupy residues Lys20–Leu40 and Ser45–Ser65. Positions 224, 232, 268, 277, 279, 344, and 346 each coordinate alpha,alpha-trehalose. Residues Asp380 and Glu580 each act as proton donor/acceptor in the active site. Residues Glu580 and Glu595 each coordinate alpha,alpha-trehalose.

It belongs to the glycosyl hydrolase 37 family. As to quaternary structure, forms homodimers. Highly expressed in flowers. Expressed at low levels in leaves and stems. Expressed in guard cells.

The protein resides in the cell membrane. It is found in the cytoplasm. The protein localises to the nucleus. It carries out the reaction alpha,alpha-trehalose + H2O = alpha-D-glucose + beta-D-glucose. Involved in the regulation of trehalose content by hydrolyzing trehalose to glucose. May play a role in the regulation of abscisic acid-induced stomatal closure in response to drought stress. This chain is Trehalase (TRE1), found in Arabidopsis thaliana (Mouse-ear cress).